We begin with the raw amino-acid sequence, 299 residues long: N-carbamoylputrescine amidase (299 aa).

Residues 10 to 268 (VVVSSLQFAC…EAVLVAQFDL (259 aa)) enclose the CN hydrolase domain. The active-site Proton acceptor is the glutamate 49. Residue lysine 122 is the Proton donor of the active site. The active-site Nucleophile is cysteine 159.

Belongs to the carbon-nitrogen hydrolase superfamily. In terms of assembly, homooctamer (isoform 2). Expressed in roots, stems, leaves and flowers.

The enzyme catalyses N-carbamoylputrescine + H2O + 2 H(+) = putrescine + NH4(+) + CO2. It functions in the pathway amine and polyamine biosynthesis; putrescine biosynthesis via agmatine pathway; putrescine from N-carbamoylputrescine (amidase route): step 1/1. Functionally, involved in polyamine biosynthesis. Catalyzes the hydrolysis of N-carbamoylputrescine to produce putrescine and ammonia. This is N-carbamoylputrescine amidase from Arabidopsis thaliana (Mouse-ear cress).